The primary structure comprises 488 residues: Inosine-5'-monophosphate dehydrogenase (488 aa).

2 CBS domains span residues 93–149 (VVTD…NQPV) and 153–214 (MTPK…CKDE). NAD(+) contacts are provided by residues D248 and 248-250 (DSS). An N6-acetyllysine modification is found at K267. 298 to 300 (GIG) is an NAD(+) binding site. K(+) is bound by residues G300 and G302. S303 is a binding site for IMP. K(+) is bound at residue C305. The Thioimidate intermediate role is filled by C305. IMP is bound by residues 338-340 (DGG), 361-362 (GS), and 385-389 (YRGMG). Residue R401 is the Proton acceptor of the active site. IMP is bound at residue E415. Residue K428 is modified to N6-acetyllysine. K(+) contacts are provided by E469, S470, and H471.

The protein belongs to the IMPDH/GMPR family. As to quaternary structure, homotetramer. It depends on K(+) as a cofactor.

It catalyses the reaction IMP + NAD(+) + H2O = XMP + NADH + H(+). It participates in purine metabolism; XMP biosynthesis via de novo pathway; XMP from IMP: step 1/1. Mycophenolic acid (MPA) is a non-competitive inhibitor that prevents formation of the closed enzyme conformation by binding to the same site as the amobile flap. In contrast, mizoribine monophosphate (MZP) is a competitive inhibitor that induces the closed conformation. MPA is a potent inhibitor of mammalian IMPDHs but a poor inhibitor of the bacterial enzymes. MZP is a more potent inhibitor of bacterial IMPDH. Its function is as follows. Catalyzes the conversion of inosine 5'-phosphate (IMP) to xanthosine 5'-phosphate (XMP), the first committed and rate-limiting step in the de novo synthesis of guanine nucleotides, and therefore plays an important role in the regulation of cell growth. This Escherichia coli O157:H7 protein is Inosine-5'-monophosphate dehydrogenase.